Reading from the N-terminus, the 384-residue chain is 8-amino-7-oxononanoate synthase (384 aa).

Arg21 serves as a coordination point for substrate. 108–109 contacts pyridoxal 5'-phosphate; sequence GY. Residue His133 participates in substrate binding. The pyridoxal 5'-phosphate site is built by Ser179, His207, and Thr233. The residue at position 236 (Lys236) is an N6-(pyridoxal phosphate)lysine. Thr350 provides a ligand contact to substrate.

Belongs to the class-II pyridoxal-phosphate-dependent aminotransferase family. BioF subfamily. As to quaternary structure, homodimer. It depends on pyridoxal 5'-phosphate as a cofactor.

It catalyses the reaction 6-carboxyhexanoyl-[ACP] + L-alanine + H(+) = (8S)-8-amino-7-oxononanoate + holo-[ACP] + CO2. It functions in the pathway cofactor biosynthesis; biotin biosynthesis. Catalyzes the decarboxylative condensation of pimeloyl-[acyl-carrier protein] and L-alanine to produce 8-amino-7-oxononanoate (AON), [acyl-carrier protein], and carbon dioxide. This chain is 8-amino-7-oxononanoate synthase, found in Buchnera aphidicola subsp. Baizongia pistaciae (strain Bp).